The chain runs to 447 residues: N-succinylarginine dihydrolase (447 aa).

Residues 19–28, Asn-110, and 137–138 contribute to the substrate site; these read AGLSFGNEAS and HR. Residue Glu-174 is part of the active site. Residue Arg-212 participates in substrate binding. His-248 is an active-site residue. Residues Asp-250 and Asn-359 each coordinate substrate. Cys-365 (nucleophile) is an active-site residue.

Belongs to the succinylarginine dihydrolase family. In terms of assembly, homodimer.

It carries out the reaction N(2)-succinyl-L-arginine + 2 H2O + 2 H(+) = N(2)-succinyl-L-ornithine + 2 NH4(+) + CO2. Its pathway is amino-acid degradation; L-arginine degradation via AST pathway; L-glutamate and succinate from L-arginine: step 2/5. Functionally, catalyzes the hydrolysis of N(2)-succinylarginine into N(2)-succinylornithine, ammonia and CO(2). The polypeptide is N-succinylarginine dihydrolase (Salmonella enteritidis PT4 (strain P125109)).